The following is a 63-amino-acid chain: Period circadian protein (63 aa).

A disordered region spans residues 1–63 (EGSGGSGSSG…VTLTESLLNK (63 aa)). Low complexity-rich tracts occupy residues 9–31 (SGNFTTGSNVRMSSVTNTSNAGT) and 39–49 (SAAASGASVNA). The segment covering 54 to 63 (VTLTESLLNK) has biased composition (polar residues).

As to quaternary structure, forms a heterodimer with timeless (TIM); the complex then translocates into the nucleus. In terms of processing, phosphorylated with a circadian rhythmicity, probably by the double-time protein (dbt). Phosphorylation could be implicated in the stability of per monomer and in the formation of heterodimer per-tim.

It is found in the nucleus. Its subcellular location is the cytoplasm. The protein localises to the perinuclear region. In terms of biological role, essential for biological clock functions. Determines the period length of circadian and ultradian rhythms; an increase in PER dosage leads to shortened circadian rhythms and a decrease leads to lengthened circadian rhythms. Essential for the circadian rhythmicity of locomotor activity, eclosion behavior, and for the rhythmic component of the male courtship song that originates in the thoracic nervous system. The biological cycle depends on the rhythmic formation and nuclear localization of the TIM-PER complex. Light induces the degradation of TIM, which promotes elimination of PER. Nuclear activity of the heterodimer coordinatively regulates PER and TIM transcription through a negative feedback loop. Behaves as a negative element in circadian transcriptional loop. Does not appear to bind DNA, suggesting indirect transcriptional inhibition. The protein is Period circadian protein (per) of Drosophila immigrans (Fruit fly).